The primary structure comprises 412 residues: Putative competence-damage inducible protein (412 aa).

Belongs to the CinA family.

The chain is Putative competence-damage inducible protein from Clostridium perfringens (strain 13 / Type A).